The following is a 167-amino-acid chain: Peptidoglycan L-alanyl-D-glutamate endopeptidase CwlK (167 aa).

An N-terminal signal peptide occupies residues 1-26 (MNLPAKTFVILCILFLLDLCFSYIRH).

The protein belongs to the peptidase M15C family.

The protein resides in the cell membrane. Its function is as follows. Cleaves the linkage of the L-alanine-D-glutamic acid of B.subtilis cell wall. The polypeptide is Peptidoglycan L-alanyl-D-glutamate endopeptidase CwlK (cwlK) (Bacillus subtilis (strain 168)).